A 514-amino-acid chain; its full sequence is 2,3-bisphosphoglycerate-independent phosphoglycerate mutase (514 aa).

2 residues coordinate Mn(2+): aspartate 14 and serine 64. The Phosphoserine intermediate role is filled by serine 64. Substrate contacts are provided by residues histidine 125, 155–156 (RD), arginine 187, arginine 193, 263–266 (RADR), and lysine 336. Mn(2+)-binding residues include aspartate 403, histidine 407, aspartate 444, histidine 445, and histidine 463.

Belongs to the BPG-independent phosphoglycerate mutase family. Monomer. Requires Mn(2+) as cofactor.

The catalysed reaction is (2R)-2-phosphoglycerate = (2R)-3-phosphoglycerate. The protein operates within carbohydrate degradation; glycolysis; pyruvate from D-glyceraldehyde 3-phosphate: step 3/5. Its function is as follows. Catalyzes the interconversion of 2-phosphoglycerate and 3-phosphoglycerate. The sequence is that of 2,3-bisphosphoglycerate-independent phosphoglycerate mutase from Shewanella sp. (strain W3-18-1).